Consider the following 334-residue polypeptide: Desumoylating isopeptidase 1 homolog (334 aa).

In terms of domain architecture, PPPDE spans 30–174; it reads TVVRLNVYDM…FLEKCIPQEW (145 aa). Active-site residues include histidine 55 and cysteine 133. The span at 310-325 shows a compositional bias: polar residues; sequence SNIGKTNSTPGTTSNG. Residues 310-334 form a disordered region; it reads SNIGKTNSTPGTTSNGLAKPTCSEC.

The protein belongs to the DeSI family. Expressed in the pharynx, hypodermis, intestine, head neuron and tail neuron.

The protein localises to the cytoplasm. It localises to the nucleus. Its function is as follows. Protease which deconjugates SUMO from some substrate proteins. Has isopeptidase but not SUMO-processing activity. Collaborates with ubql-1 in the export of ubiquitinated proteins from the nucleus to the cytoplasm. The sequence is that of Desumoylating isopeptidase 1 homolog from Caenorhabditis elegans.